The chain runs to 201 residues: Recombination protein RecR (201 aa).

The C4-type zinc finger occupies 60-75; that stretch reads CSVCGNVDTTDPCSIC. Residues 83–178 form the Toprim domain; that stretch reads TTIIVVEDVA…KITRLAHGVP (96 aa).

This sequence belongs to the RecR family.

Functionally, may play a role in DNA repair. It seems to be involved in an RecBC-independent recombinational process of DNA repair. It may act with RecF and RecO. The polypeptide is Recombination protein RecR (Bartonella quintana (strain Toulouse) (Rochalimaea quintana)).